The chain runs to 94 residues: U1-theraphotoxin-Sp1a (94 aa).

An N-terminal signal peptide occupies residues 1–22 (MIFLLPSIISVMLLAEPVLMLG). Residues 23 to 58 (DTEDADLMEMVQLSRPFFNPIIRAVELVELREERQR) constitute a propeptide that is removed on maturation. 3 disulfide bridges follow: cysteine 60/cysteine 78, cysteine 67/cysteine 83, and cysteine 77/cysteine 88. Residue valine 92 is modified to Valine amide.

The protein belongs to the neurotoxin 14 (magi-1) family. OAIP-1 subfamily. Expressed by the venom gland.

It localises to the secreted. Probable ion channel inhibitor. Shows insecticidal activity. Acts synergistically with the neonicotinoid insecticide imidacloprid. Is neither a repellent that repels insects nor an attractant that is preferentially consumed by insects. Is very stable. The sequence is that of U1-theraphotoxin-Sp1a from Selenotypus plumipes (Australian featherleg tarantula).